The primary structure comprises 334 residues: Transaldolase (334 aa).

Ser-2 bears the N-acetylserine mark. Catalysis depends on Lys-143, which acts as the Schiff-base intermediate with substrate.

The protein belongs to the transaldolase family. Type 1 subfamily. In terms of assembly, homodimer.

The enzyme catalyses D-sedoheptulose 7-phosphate + D-glyceraldehyde 3-phosphate = D-erythrose 4-phosphate + beta-D-fructose 6-phosphate. It functions in the pathway carbohydrate degradation; pentose phosphate pathway; D-glyceraldehyde 3-phosphate and beta-D-fructose 6-phosphate from D-ribose 5-phosphate and D-xylulose 5-phosphate (non-oxidative stage): step 2/3. In terms of biological role, transaldolase is important for the balance of metabolites in the pentose-phosphate pathway. This Kluyveromyces lactis (strain ATCC 8585 / CBS 2359 / DSM 70799 / NBRC 1267 / NRRL Y-1140 / WM37) (Yeast) protein is Transaldolase (TAL1).